The chain runs to 300 residues: Probable amino-acid ABC transporter periplasmic-binding protein y4tE (300 aa).

The signal sequence occupies residues 1–27 (MTHLKISKTAPAVARFLPAGRIASVAA).

This sequence belongs to the bacterial solute-binding protein 3 family.

The protein resides in the periplasm. In terms of biological role, probably part of the binding-protein-dependent transport system y4tEFGH for an amino acid. The sequence is that of Probable amino-acid ABC transporter periplasmic-binding protein y4tE from Sinorhizobium fredii (strain NBRC 101917 / NGR234).